The primary structure comprises 359 residues: DNA polymerase IV (359 aa).

In terms of domain architecture, UmuC spans 7–188 (IIHIDMDAFY…LPIGKFFGVG (182 aa)). Mg(2+) is bound by residues Asp-11 and Asp-106. The active site involves Glu-107.

It belongs to the DNA polymerase type-Y family. Monomer. Mg(2+) serves as cofactor.

The protein resides in the cytoplasm. It carries out the reaction DNA(n) + a 2'-deoxyribonucleoside 5'-triphosphate = DNA(n+1) + diphosphate. In terms of biological role, poorly processive, error-prone DNA polymerase involved in untargeted mutagenesis. Copies undamaged DNA at stalled replication forks, which arise in vivo from mismatched or misaligned primer ends. These misaligned primers can be extended by PolIV. Exhibits no 3'-5' exonuclease (proofreading) activity. May be involved in translesional synthesis, in conjunction with the beta clamp from PolIII. This chain is DNA polymerase IV, found in Clostridium perfringens (strain 13 / Type A).